The primary structure comprises 684 residues: Early phosphoprotein p84 (684 aa).

Disordered regions lie at residues 166–301, 317–336, 357–393, 407–452, and 569–657; these read LGGS…MSLP, SSAV…HHNA, VVSS…AAAT, RAPA…SPRF, and SNSS…GPSF. Residues 180 to 191 are compositionally biased toward basic and acidic residues; it reads EQQRRRQEQRHE. Residues 201–220 show a composition bias toward gly residues; sequence AGGGGGGGASGGGGGGGSGG. Composition is skewed to basic and acidic residues over residues 232-245 and 258-272; these read RDPR…ERRP and REAK…HEGH. The short motif at 261 to 264 is the Nuclear localization signal element; sequence KRQK. Positions 285–296 are enriched in gly residues; sequence GGAGGGGGGGSG. Over residues 326–335 the composition is skewed to basic residues; the sequence is NHHHHHHHHN. Residues 359–377 show a composition bias toward low complexity; sequence SSPSSTSPSSLLSLPRPSS. Positions 425 to 442 are enriched in polar residues; sequence STTPVSNCRVPPNSQESA. The span at 578–587 shows a compositional bias: pro residues; that stretch reads PLPPPPPPPG. A compositionally biased stretch (gly residues) spans 598-608; that stretch reads RGGGGGGGGGR. Residues 612-622 are compositionally biased toward low complexity; the sequence is RQAASSSSSSS.

It belongs to the herpesviridae U79/UL112 family. As to quaternary structure, isoforms 1, 2, 3 and 4 interacts with themselves and with each other via their shared N-terminal regions; these interactions are important to both their intranuclear targeting and the recruitment of UL44 to subnuclear sites for viral replication.

It is found in the host nucleus. The protein resides in the virion. Functionally, needed for efficient replication. Recruits the DNA polymerase processivity factor to pre-replication foci. The polypeptide is Early phosphoprotein p84 (UL112/UL113) (Homo sapiens (Human)).